Reading from the N-terminus, the 169-residue chain is Cell division inhibitor SulA (169 aa).

A ftsZ binding region spans residues 106–112 (ALRTGNY). A lon protease binding region spans residues 162–169 (KIHSNLYH).

Belongs to the SulA family. In terms of assembly, interacts with FtsZ. Post-translationally, is rapidly cleaved and degraded by the Lon protease once DNA damage is repaired.

Its function is as follows. Component of the SOS system and an inhibitor of cell division. Accumulation of SulA causes rapid cessation of cell division and the appearance of long, non-septate filaments. In the presence of GTP, binds a polymerization-competent form of FtsZ in a 1:1 ratio, thus inhibiting FtsZ polymerization and therefore preventing it from participating in the assembly of the Z ring. This mechanism prevents the premature segregation of damaged DNA to daughter cells during cell division. This is Cell division inhibitor SulA from Escherichia coli O7:K1 (strain IAI39 / ExPEC).